A 548-amino-acid chain; its full sequence is Chaperonin GroEL 2 (548 aa).

ATP-binding positions include 30 to 33 (TLGP), Lys51, 87 to 91 (DGTTT), Gly415, 479 to 481 (NAA), and Asp495. The interval 524–548 (APKDAPPTAPAGVPGAGAGGPGFDF) is disordered. A compositionally biased stretch (gly residues) spans 537-548 (PGAGAGGPGFDF).

It belongs to the chaperonin (HSP60) family. In terms of assembly, forms a cylinder of 14 subunits composed of two heptameric rings stacked back-to-back. Interacts with the co-chaperonin GroES.

It localises to the cytoplasm. The catalysed reaction is ATP + H2O + a folded polypeptide = ADP + phosphate + an unfolded polypeptide.. In terms of biological role, together with its co-chaperonin GroES, plays an essential role in assisting protein folding. The GroEL-GroES system forms a nano-cage that allows encapsulation of the non-native substrate proteins and provides a physical environment optimized to promote and accelerate protein folding. The sequence is that of Chaperonin GroEL 2 from Burkholderia pseudomallei (strain 668).